We begin with the raw amino-acid sequence, 133 residues long: Profilin (133 aa).

It belongs to the profilin family. In terms of assembly, occurs in many kinds of cells as a complex with monomeric actin in a 1:1 ratio.

The protein localises to the cytoplasm. Its subcellular location is the cytoskeleton. Functionally, binds to actin and affects the structure of the cytoskeleton. At high concentrations, profilin prevents the polymerization of actin, whereas it enhances it at low concentrations. By binding to PIP2, it inhibits the formation of IP3 and DG. This is Profilin from Mercurialis annua (Annual mercury).